The sequence spans 193 residues: Thymidine kinase (193 aa).

Residues 9 to 16 (ASMNAGKS) and 87 to 90 (DEAQ) each bind ATP. Glu88 serves as the catalytic Proton acceptor. Zn(2+) contacts are provided by Cys145, Cys147, Cys182, and His185.

The protein belongs to the thymidine kinase family. In terms of assembly, homotetramer.

It localises to the cytoplasm. The enzyme catalyses thymidine + ATP = dTMP + ADP + H(+). This is Thymidine kinase from Zymomonas mobilis subsp. mobilis (strain ATCC 31821 / ZM4 / CP4).